The following is a 62-amino-acid chain: UPF0291 protein CLB_2550 (62 aa).

Belongs to the UPF0291 family.

The protein localises to the cytoplasm. The polypeptide is UPF0291 protein CLB_2550 (Clostridium botulinum (strain ATCC 19397 / Type A)).